The sequence spans 562 residues: Dihydroxy-acid dehydratase 2 (562 aa).

Cysteine 50 serves as a coordination point for [2Fe-2S] cluster. Aspartate 82 is a Mg(2+) binding site. [2Fe-2S] cluster is bound at residue cysteine 123. Residues aspartate 124, lysine 125, and glutamate 447 each contribute to the Mg(2+) site. Position 125 is an N6-carboxylysine (lysine 125). Residue serine 473 is the Proton acceptor of the active site.

It belongs to the IlvD/Edd family. In terms of assembly, homodimer. Requires [2Fe-2S] cluster as cofactor. Mg(2+) serves as cofactor.

The enzyme catalyses (2R)-2,3-dihydroxy-3-methylbutanoate = 3-methyl-2-oxobutanoate + H2O. It carries out the reaction (2R,3R)-2,3-dihydroxy-3-methylpentanoate = (S)-3-methyl-2-oxopentanoate + H2O. It participates in amino-acid biosynthesis; L-isoleucine biosynthesis; L-isoleucine from 2-oxobutanoate: step 3/4. It functions in the pathway amino-acid biosynthesis; L-valine biosynthesis; L-valine from pyruvate: step 3/4. Its function is as follows. Functions in the biosynthesis of branched-chain amino acids. Catalyzes the dehydration of (2R,3R)-2,3-dihydroxy-3-methylpentanoate (2,3-dihydroxy-3-methylvalerate) into 2-oxo-3-methylpentanoate (2-oxo-3-methylvalerate) and of (2R)-2,3-dihydroxy-3-methylbutanoate (2,3-dihydroxyisovalerate) into 2-oxo-3-methylbutanoate (2-oxoisovalerate), the penultimate precursor to L-isoleucine and L-valine, respectively. The chain is Dihydroxy-acid dehydratase 2 from Bordetella pertussis (strain Tohama I / ATCC BAA-589 / NCTC 13251).